A 142-amino-acid polypeptide reads, in one-letter code: Alpha-lactalbumin (142 aa).

The first 18 residues, 1–18 (MMSFVSLLLVGILFHATQ), serve as a signal peptide directing secretion. The C-type lysozyme domain maps to 20–142 (EQLTKCEVFR…KLDQWLCEKL (123 aa)). 4 cysteine pairs are disulfide-bonded: Cys25–Cys139, Cys47–Cys130, Cys80–Cys96, and Cys92–Cys110. Residues Asn64 and Asn93 are each glycosylated (N-linked (GlcNAc...) asparagine). Residues Lys98, Asp101, Asp103, Asp106, and Asp107 each contribute to the Ca(2+) site.

This sequence belongs to the glycosyl hydrolase 22 family. As to quaternary structure, lactose synthase (LS) is a heterodimer of a catalytic component, beta1,4-galactosyltransferase (beta4Gal-T1) and a regulatory component, alpha-lactalbumin (LA). As to expression, mammary gland specific. Secreted in milk.

The protein resides in the secreted. In terms of biological role, regulatory subunit of lactose synthase, changes the substrate specificity of galactosyltransferase in the mammary gland making glucose a good acceptor substrate for this enzyme. This enables LS to synthesize lactose, the major carbohydrate component of milk. In other tissues, galactosyltransferase transfers galactose onto the N-acetylglucosamine of the oligosaccharide chains in glycoproteins. The sequence is that of Alpha-lactalbumin (LALBA) from Bubalus bubalis (Domestic water buffalo).